Reading from the N-terminus, the 1240-residue chain is ABC transporter B family member 17 (1240 aa).

The ABC transmembrane type-1 1 domain occupies 35–324 (MALGLIGAVG…SLSNLKYFSE (290 aa)). The helical transmembrane segment at 36 to 56 (ALGLIGAVGDGFITPVVVFIF) threads the bilayer. Asn-70 is a glycosylation site (N-linked (GlcNAc...) asparagine). 5 consecutive transmembrane segments (helical) span residues 81 to 101 (VVAL…EGYC), 158 to 180 (LPNF…ILMW), 184 to 206 (IVGF…ALVS), 264 to 284 (GITI…TWYG), and 296 to 316 (GTVF…GQSL). The 237-residue stretch at 359-595 (VEFNHVKFTY…IDGQYTSLVS (237 aa)) folds into the ABC transporter 1 domain. 394–401 (GGSGSGKS) contributes to the ATP binding site. 3 N-linked (GlcNAc...) asparagine glycosylation sites follow: Asn-542, Asn-609, and Asn-642. One can recognise an ABC transmembrane type-1 2 domain in the interval 672 to 960 (ALYGCLSAAL…AGTMTTDLAR (289 aa)). A run of 2 helical transmembrane segments spans residues 681 to 701 (LVGV…SVFF) and 714 to 734 (IYVL…ISQH). N-linked (GlcNAc...) asparagine glycosylation is present at Asn-769. Transmembrane regions (helical) follow at residues 793-815 (MSLL…VIAW), 817-839 (LAIV…RVLL), 896-919 (WLAG…NFWY), and 923-943 (LIAD…IFVT). Residues 995 to 1233 (ITFLNVDFAY…GPTGTYFSLA (239 aa)) form the ABC transporter 2 domain. N-linked (GlcNAc...) asparagine glycosylation is present at Asn-1015. An ATP-binding site is contributed by 1030–1037 (GTSGSGKS).

Belongs to the ABC transporter superfamily. ABCB family. Multidrug resistance exporter (TC 3.A.1.201) subfamily.

Its subcellular location is the membrane. This is ABC transporter B family member 17 (ABCB17) from Arabidopsis thaliana (Mouse-ear cress).